The chain runs to 320 residues: Beta-carotene ketolase (320 aa).

The enzyme catalyses all-trans-beta-carotene + 2 AH2 + 2 O2 = echinenone + 2 A + 3 H2O. The catalysed reaction is echinenone + 2 AH2 + 2 O2 = canthaxanthin + 2 A + 3 H2O. Its pathway is carotenoid biosynthesis; astaxanthin biosynthesis. Converts beta-carotene to canthaxanthin via echinenone. This Haematococcus lacustris (Green alga) protein is Beta-carotene ketolase.